Consider the following 32-residue polypeptide: Apolipophorin-3 (32 aa).

The segment at 1 to 32 is disordered; sequence DAPSTTPPQDXEKKAAEFQKTFTEQXNQLANK. The span at 20–32 shows a compositional bias: polar residues; that stretch reads KTFTEQXNQLANK.

Belongs to the insect apolipophorin-3 family. As to quaternary structure, equilibrium between a soluble monomer and a bound lipoprotein form. Apolipophorin-3 associates with lipophorin during lipid loading until each particle contains 9 or 14 molecules of apolipophorin-3. Hemolymph.

The protein resides in the secreted. Functionally, assists in the loading of diacylglycerol, generated from triacylglycerol stores in the fat body through the action of adipokinetic hormone, into lipophorin, the hemolymph lipoprotein. It increases the lipid carrying capacity of lipophorin by covering the expanding hydrophobic surface resulting from diacylglycerol uptake. It thus plays a critical role in the transport of lipids during flight in several species of insects. The protein is Apolipophorin-3 of Diatraea grandiosella (Southwestern corn borer).